The sequence spans 308 residues: Ribosomal protein L11 methyltransferase (308 aa).

Positions 160, 181, 203, and 245 each coordinate S-adenosyl-L-methionine.

This sequence belongs to the methyltransferase superfamily. PrmA family.

It is found in the cytoplasm. The enzyme catalyses L-lysyl-[protein] + 3 S-adenosyl-L-methionine = N(6),N(6),N(6)-trimethyl-L-lysyl-[protein] + 3 S-adenosyl-L-homocysteine + 3 H(+). Functionally, methylates ribosomal protein L11. The sequence is that of Ribosomal protein L11 methyltransferase from Thermoanaerobacter pseudethanolicus (strain ATCC 33223 / 39E) (Clostridium thermohydrosulfuricum).